Reading from the N-terminus, the 419-residue chain is Gamma-glutamyl phosphate reductase (419 aa).

This sequence belongs to the gamma-glutamyl phosphate reductase family.

Its subcellular location is the cytoplasm. The catalysed reaction is L-glutamate 5-semialdehyde + phosphate + NADP(+) = L-glutamyl 5-phosphate + NADPH + H(+). The protein operates within amino-acid biosynthesis; L-proline biosynthesis; L-glutamate 5-semialdehyde from L-glutamate: step 2/2. Catalyzes the NADPH-dependent reduction of L-glutamate 5-phosphate into L-glutamate 5-semialdehyde and phosphate. The product spontaneously undergoes cyclization to form 1-pyrroline-5-carboxylate. The polypeptide is Gamma-glutamyl phosphate reductase (Nitratidesulfovibrio vulgaris (strain ATCC 29579 / DSM 644 / CCUG 34227 / NCIMB 8303 / VKM B-1760 / Hildenborough) (Desulfovibrio vulgaris)).